The following is a 210-amino-acid chain: DNA-directed RNA polymerase III subunit rpc31 (210 aa).

Ser-103 is subject to Phosphoserine. The segment at 151–210 is disordered; the sequence is KDESSEAAHPNIEEEPDEGLEEEDEDFGDDDDNDYGENYFDNGEGDDYDDYDGDEGAIYE. Acidic residues-rich tracts occupy residues 163–185 and 193–210; these read EEEP…DNDY and GEGD…AIYE.

Belongs to the eukaryotic RPC7 RNA polymerase subunit family. In terms of assembly, component of the RNA polymerase III (Pol III) complex.

The protein resides in the cytoplasm. It is found in the nucleus. DNA-dependent RNA polymerase catalyzes the transcription of DNA into RNA using the four ribonucleoside triphosphates as substrates. Specific peripheric component of RNA polymerase III which synthesizes small RNAs, such as 5S rRNA and tRNAs. The chain is DNA-directed RNA polymerase III subunit rpc31 (rpc31) from Schizosaccharomyces pombe (strain 972 / ATCC 24843) (Fission yeast).